Here is a 252-residue protein sequence, read N- to C-terminus: Transcriptional regulatory protein HptR (252 aa).

One can recognise a Response regulatory domain in the interval 3-118 (KVVICDDERI…QLEVILGRLV (116 aa)). Aspartate 55 carries the post-translational modification 4-aspartylphosphate. The region spanning 153 to 250 (NQIVDQIKQS…QMSPSDYCKQ (98 aa)) is the HTH araC/xylS-type domain. DNA-binding regions (H-T-H motif) lie at residues 170-191 (SDLI…KDHV) and 217-240 (HYEI…KKYL).

In terms of processing, phosphorylated by HptS.

The protein resides in the cytoplasm. In terms of biological role, member of the two-component regulatory system HptS/HptR that regulates genes involved in hexose phosphate transport system in response to changes in extracellular phosphate sources. Activates uhpT expression to facilitate glucose-6-phosphate/G6P utilization by directly binding to its promoter. Antagonizes CcpA-dependent transcription of a subset of CcpA-regulated genes involved in antibiotic susceptibility. The sequence is that of Transcriptional regulatory protein HptR (hptR) from Staphylococcus aureus (strain Mu50 / ATCC 700699).